A 155-amino-acid chain; its full sequence is Putative pre-16S rRNA nuclease (155 aa).

This sequence belongs to the YqgF nuclease family.

Its subcellular location is the cytoplasm. Its function is as follows. Could be a nuclease involved in processing of the 5'-end of pre-16S rRNA. In Novosphingobium aromaticivorans (strain ATCC 700278 / DSM 12444 / CCUG 56034 / CIP 105152 / NBRC 16084 / F199), this protein is Putative pre-16S rRNA nuclease.